Here is a 395-residue protein sequence, read N- to C-terminus: Prostaglandin D2 receptor 2 (395 aa).

Topologically, residues 1–33 (MSANATLKPLCPILEQMSRLQSHSNTSIRYIDH) are extracellular. Residues asparagine 4 and asparagine 25 are each glycosylated (N-linked (GlcNAc...) asparagine). A helical transmembrane segment spans residues 34 to 56 (AAVLLHGLASLLGLVENGVILFV). At 57 to 67 (VGCRMRQTVVT) the chain is on the cytoplasmic side. The chain crosses the membrane as a helical span at residues 68–89 (TWVLHLALSDLLASASLPFFTY). Residues 90-106 (FLAVGHSWELGTTFCKL) are Extracellular-facing. A disulfide bond links cysteine 104 and cysteine 182. Residues 107–127 (HSSIFFLNMFASGFLLSAISL) traverse the membrane as a helical segment. Residues 128–146 (DRCLQVVRPVWAQNHRTVA) lie on the Cytoplasmic side of the membrane. The chain crosses the membrane as a helical span at residues 147–168 (AAHKVCLVLWALAVLNTVPYFV). Residues 169-210 (FRDTISRLDGRIMCYYNVLLLNPGPDRDATCNSRQVALAVSK) are Extracellular-facing. A helical transmembrane segment spans residues 211–231 (FLLAFLVPLAIIASSHAAVSL). Topologically, residues 232–247 (RLQHRGRRRPGRFVRL) are cytoplasmic. A helical transmembrane segment spans residues 248-269 (VAAVVAAFALCWGPYHVFSLLE). At 270–288 (ARAHANPGLRPLVWRGLPF) the chain is on the extracellular side. The chain crosses the membrane as a helical span at residues 289-308 (VTSLAFFNSVANPVLYVLTC). Topologically, residues 309–395 (PDMLRKLRRS…LNRALSSTSS (87 aa)) are cytoplasmic. The Involved in the recycling of CRTH2 motif lies at 330-333 (DSEL). Residues serine 331 and serine 345 each carry the phosphoserine modification. Residues 333 to 363 (LGGAGSSRRRRTSSTARSASPLALCSRPEEP) are disordered.

This sequence belongs to the G-protein coupled receptor 1 family. Phosphorylated. Widespread expression. High expression in stomach, small intestine, heart and thymus. Intermediate expression in colon, spinal cord and peripheral blood and low expression in brain, skeletal muscle and spleen. Expressed also on Th2- and Tc2- type cells, eosinophils and basophils.

It is found in the cell membrane. Receptor for prostaglandin D2 (PGD2). Coupled to the G(i)-protein. Receptor activation may result in pertussis toxin-sensitive decreases in cAMP levels and Ca(2+) mobilization. PI3K signaling is also implicated in mediating PTGDR2 effects. PGD2 induced receptor internalization. CRTH2 internalization can be regulated by diverse kinases such as, PKC, PKA, GRK2, GPRK5/GRK5 and GRK6. Receptor activation is responsible, at least in part, in immune regulation and allergic/inflammation responses. The polypeptide is Prostaglandin D2 receptor 2 (PTGDR2) (Homo sapiens (Human)).